We begin with the raw amino-acid sequence, 454 residues long: MSLCLWKQCLDRLQDELPNTEFSMWIRSLKAKLNNNILEIYAPNKFVLEWVKDKYLNHLKKILQDYCGTNSPLIKFEIYQIYKENKLKKNIENNNNNKNEKLIWSNIPKFKNLSYRSNINKRYNFQNFVEGKSNQLARSAAFQAARNPGNSYNPLFLYGATGLGKTHLLHAIGNEILSYKYDIKIIFMNSECFVQDMVKALKNNAIEKFKLYYRSVDALLIDDIQFFAHKERSQEEFFHTFNTLIEGNQQIILTSDRYPKEINGVEDRLKSRFSWGLTIAIDPPEIETRVAILIKKADQNNVILSNEVAFFIAKHLRSNVRELEGALNRVILNSRFTHRAITVDFAREALQDILAVQEKIITIDNIQKTVAKYYKIKVSDLLSKKRSRSIARPRQMAMAMAKKLTNHSLPEIGEAFSGRDHTTVLHACCKIEQLRKENHDIKKDFLNLIRTLSK.

The segment at 1 to 79 is domain I, interacts with DnaA modulators; it reads MSLCLWKQCL…NSPLIKFEIY (79 aa). The domain II stretch occupies residues 79–117; the sequence is YQIYKENKLKKNIENNNNNKNEKLIWSNIPKFKNLSYRS. Positions 118 to 334 are domain III, AAA+ region; it reads NINKRYNFQN…GALNRVILNS (217 aa). Residues G162, G164, K165, and T166 each coordinate ATP. The segment at 335–454 is domain IV, binds dsDNA; it reads RFTHRAITVD…FLNLIRTLSK (120 aa).

This sequence belongs to the DnaA family. In terms of assembly, oligomerizes as a right-handed, spiral filament on DNA at oriC.

Its subcellular location is the cytoplasm. Its function is as follows. Plays an essential role in the initiation and regulation of chromosomal replication. ATP-DnaA binds to the origin of replication (oriC) to initiate formation of the DNA replication initiation complex once per cell cycle. Binds the DnaA box (a 9 base pair repeat at the origin) and separates the double-stranded (ds)DNA. Forms a right-handed helical filament on oriC DNA; dsDNA binds to the exterior of the filament while single-stranded (ss)DNA is stabiized in the filament's interior. The ATP-DnaA-oriC complex binds and stabilizes one strand of the AT-rich DNA unwinding element (DUE), permitting loading of DNA polymerase. After initiation quickly degrades to an ADP-DnaA complex that is not apt for DNA replication. Binds acidic phospholipids. The chain is Chromosomal replication initiator protein DnaA from Buchnera aphidicola subsp. Acyrthosiphon pisum (strain 5A).